The following is a 381-amino-acid chain: O-antigen chain mannosyltransferase B (381 aa).

This sequence belongs to the glycosyltransferase group 1 family. Glycosyltransferase 4 subfamily.

The enzyme catalyses alpha-D-mannosyl-(1-&gt;3)-N-acetyl-alpha-D-glucosaminyl-di-trans,octa-cis-undecaprenyl diphosphate + 2 GDP-alpha-D-mannose = alpha-D-mannosyl-(1-&gt;3)-alpha-D-mannosyl-(1-&gt;3)-alpha-D-mannosyl-(1-&gt;3)-N-acetyl-alpha-D-glucosaminyl-di-trans,octa-cis-undecaprenyl diphosphate + 2 GDP + 2 H(+). Its pathway is bacterial outer membrane biogenesis; LPS O-antigen biosynthesis. Its function is as follows. Mannosyltransferase involved in the biosynthesis of the repeat unit of the lipopolysaccharide (LPS) O-antigen region. Catalyzes the transfer of two alpha-(1-&gt;3)-linked mannose residues to the product of the WbdC enzyme during the synthesis of the adapter region. The protein is O-antigen chain mannosyltransferase B of Escherichia coli.